We begin with the raw amino-acid sequence, 539 residues long: Transcription factor prr1 (539 aa).

Residues 7 to 111 (SSDFVRKLFN…LLDNIKRKAP (105 aa)) mediate DNA binding. T221 is subject to Phosphothreonine. Phosphoserine is present on S223. Polar residues predominate over residues 251 to 263 (GTAQPSLYNTPSS). The segment at 251–281 (GTAQPSLYNTPSSDYELANQEKPADSMASAA) is disordered. The region spanning 369-483 (RILLVEDDEL…TLLQLLKKQL (115 aa)) is the Response regulatory domain. Position 418 is a 4-aspartylphosphate (D418).

The protein in the N-terminal section; belongs to the HSF family.

The protein resides in the nucleus. In terms of biological role, involved in oxidative stress. Transcription factor that acts upon trr1 and ctt1. This is Transcription factor prr1 (prr1) from Schizosaccharomyces pombe (strain 972 / ATCC 24843) (Fission yeast).